The sequence spans 339 residues: Phenylalanine--tRNA ligase alpha subunit (339 aa).

Glu-254 serves as a coordination point for Mg(2+).

Belongs to the class-II aminoacyl-tRNA synthetase family. Phe-tRNA synthetase alpha subunit type 1 subfamily. As to quaternary structure, tetramer of two alpha and two beta subunits. The cofactor is Mg(2+).

The protein localises to the cytoplasm. The catalysed reaction is tRNA(Phe) + L-phenylalanine + ATP = L-phenylalanyl-tRNA(Phe) + AMP + diphosphate + H(+). The protein is Phenylalanine--tRNA ligase alpha subunit of Clostridium kluyveri (strain ATCC 8527 / DSM 555 / NBRC 12016 / NCIMB 10680 / K1).